The primary structure comprises 79 residues: Toxin ICK-20 (79 aa).

Residues 1–20 (MMKYFLVLCLVVLGVAAVQA) form the signal peptide. Cystine bridges form between Cys-43/Cys-57, Cys-50/Cys-61, Cys-56/Cys-78, and Cys-68/Cys-74. An N-linked (GlcNAc...) asparagine glycan is attached at Asn-71.

Belongs to the neurotoxin 13 (insecticidal toxin ABC) family. ICK-21 subfamily. In terms of tissue distribution, expressed by the venom gland.

It localises to the secreted. Functionally, ion channel inhibitor. The chain is Toxin ICK-20 from Trittame loki (Brush-footed trapdoor spider).